The sequence spans 89 residues: Large ribosomal subunit protein bL28 (89 aa).

Belongs to the bacterial ribosomal protein bL28 family.

The sequence is that of Large ribosomal subunit protein bL28 from Chlamydia felis (strain Fe/C-56) (Chlamydophila felis).